The following is a 282-amino-acid chain: HMG box-containing protein R545 (282 aa).

A disordered region spans residues 1–282 (MPKKTATKAN…KKEASDEESD (282 aa)). Over residues 16–29 (DSENDSVVSEEEDN) the composition is skewed to acidic residues. The span at 70–87 (KGKVNAKKAPAKKAPVKK) shows a compositional bias: basic residues. Residues 93 to 121 (DSDNEEDEASEDGSDDEEDVVSADDSDSD) show a composition bias toward acidic residues. A compositionally biased stretch (basic residues) spans 127–153 (KAAKKAPAKKAPAKKAPAKKAPAKKGK). 2 stretches are compositionally biased toward basic and acidic residues: residues 176 to 187 (TKKDGDKPKKPL) and 197 to 214 (RMPE…KEYM). The HMG box DNA-binding region spans 183-252 (PKKPLSDYQK…KAPAKGGSKS (70 aa)). The span at 253–273 (TAKKAPAKKAPAKKAPAKKSK) shows a compositional bias: basic residues.

This is HMG box-containing protein R545 from Acanthamoeba polyphaga mimivirus (APMV).